Reading from the N-terminus, the 428-residue chain is Stabilizer of axonemal microtubules 4 (428 aa).

Positions 201-231 are disordered; it reads AKEETGFTEESNKNPIVFQPPSQALPGDPVL.

Microtubule inner protein component of sperm flagellar doublet microtubules. Interacts with PPP1CA.

The protein localises to the cell projection. The protein resides in the cilium. Its subcellular location is the cytoplasm. It localises to the cytoskeleton. It is found in the flagellum axoneme. The polypeptide is Stabilizer of axonemal microtubules 4 (Bos taurus (Bovine)).